A 62-amino-acid polypeptide reads, in one-letter code: Conotoxin Qc5.2 (62 aa).

An N-terminal signal peptide occupies residues 1–22 (MRCVPVFIILLLLSPSAPSVDA). Positions 23–48 (HPMTKDDVPQASLHDDAKRTLQVPWM) are excised as a propeptide. V60 bears the Valine amide mark.

This sequence belongs to the conotoxin T superfamily. Contains 2 disulfide bonds that can be either 'C1-C3, C2-C4' or 'C1-C4, C2-C3', since these disulfide connectivities have been observed for conotoxins with cysteine framework V (for examples, see AC P0DQQ7 and AC P81755). As to expression, expressed by the venom duct.

It is found in the secreted. The chain is Conotoxin Qc5.2 from Conus quercinus (Oak cone).